The following is a 358-amino-acid chain: tRNA (guanine-N(7)-)-methyltransferase (358 aa).

Residues 1–29 are disordered; that stretch reads MTPPPPKRQKRDEYRKATAEATSQSGASD. Residues glycine 99 and 122–123 contribute to the S-adenosyl-L-methionine site; that span reads EI. Positions 151–186 are enriched in low complexity; that stretch reads TATAASETPSQQQAQIDGKQANANAAADAASPAPST. The segment at 151–194 is disordered; it reads TATAASETPSQQQAQIDGKQANANAAADAASPAPSTDTEHMPTT. Residues 209–210 and cysteine 229 each bind S-adenosyl-L-methionine; that span reads NT. Aspartate 232 is an active-site residue. 330–332 is a binding site for S-adenosyl-L-methionine; it reads TEE.

It belongs to the class I-like SAM-binding methyltransferase superfamily. TrmB family. As to quaternary structure, forms a complex with trm82.

Its subcellular location is the nucleus. It carries out the reaction guanosine(46) in tRNA + S-adenosyl-L-methionine = N(7)-methylguanosine(46) in tRNA + S-adenosyl-L-homocysteine. The protein operates within tRNA modification; N(7)-methylguanine-tRNA biosynthesis. In terms of biological role, catalyzes the formation of N(7)-methylguanine at position 46 (m7G46) in tRNA. This is tRNA (guanine-N(7)-)-methyltransferase (trm8) from Aspergillus fumigatus (strain ATCC MYA-4609 / CBS 101355 / FGSC A1100 / Af293) (Neosartorya fumigata).